Here is an 876-residue protein sequence, read N- to C-terminus: Alanine--tRNA ligase (876 aa).

Zn(2+)-binding residues include H560, H564, C662, and H666.

The protein belongs to the class-II aminoacyl-tRNA synthetase family. Zn(2+) serves as cofactor.

It localises to the cytoplasm. It catalyses the reaction tRNA(Ala) + L-alanine + ATP = L-alanyl-tRNA(Ala) + AMP + diphosphate. In terms of biological role, catalyzes the attachment of alanine to tRNA(Ala) in a two-step reaction: alanine is first activated by ATP to form Ala-AMP and then transferred to the acceptor end of tRNA(Ala). Also edits incorrectly charged Ser-tRNA(Ala) and Gly-tRNA(Ala) via its editing domain. This chain is Alanine--tRNA ligase, found in Synechococcus sp. (strain ATCC 27144 / PCC 6301 / SAUG 1402/1) (Anacystis nidulans).